Consider the following 176-residue polypeptide: Membrane-anchored junction protein (176 aa).

Residues 1-151 (MSLKPFTYPF…QHNSPPPKER (151 aa)) lie on the Nuclear side of the membrane. The tract at residues 59-150 (AVMRKRKHMD…LQHNSPPPKE (92 aa)) is disordered. Over residues 95–107 (PPVETRRNRERKT) the composition is skewed to basic and acidic residues. Residues 108-120 (QQGLQETLASDIT) show a composition bias toward polar residues. Residues 152–170 (AATGFFGFLSSLFPFRYFF) form a helical membrane-spanning segment. The Perinuclear space portion of the chain corresponds to 171–176 (RKSSHS).

It belongs to the MAJIN family. In terms of assembly, component of the MAJIN-TERB1-TERB2 complex, composed of MAJIN, TERB1 and TERB2.

It is found in the nucleus inner membrane. The protein resides in the chromosome. Its subcellular location is the telomere. Its function is as follows. Meiosis-specific telomere-associated protein involved in meiotic telomere attachment to the nucleus inner membrane, a crucial step for homologous pairing and synapsis. Component of the MAJIN-TERB1-TERB2 complex, which promotes telomere cap exchange by mediating attachment of telomeric DNA to the inner nuclear membrane and replacement of the protective cap of telomeric chromosomes: in early meiosis, the MAJIN-TERB1-TERB2 complex associates with telomeric DNA and the shelterin/telosome complex. During prophase, the complex matures and promotes release of the shelterin/telosome complex from telomeric DNA. In the complex, MAJIN acts as the anchoring subunit to the nucleus inner membrane. MAJIN shows DNA-binding activity, possibly for the stabilization of telomere attachment on the nucleus inner membrane. The polypeptide is Membrane-anchored junction protein (Homo sapiens (Human)).